We begin with the raw amino-acid sequence, 123 residues long: Ribonuclease P protein component (123 aa).

The protein belongs to the RnpA family. As to quaternary structure, consists of a catalytic RNA component (M1 or rnpB) and a protein subunit.

The enzyme catalyses Endonucleolytic cleavage of RNA, removing 5'-extranucleotides from tRNA precursor.. In terms of biological role, RNaseP catalyzes the removal of the 5'-leader sequence from pre-tRNA to produce the mature 5'-terminus. It can also cleave other RNA substrates such as 4.5S RNA. The protein component plays an auxiliary but essential role in vivo by binding to the 5'-leader sequence and broadening the substrate specificity of the ribozyme. In Streptomyces avermitilis (strain ATCC 31267 / DSM 46492 / JCM 5070 / NBRC 14893 / NCIMB 12804 / NRRL 8165 / MA-4680), this protein is Ribonuclease P protein component.